A 98-amino-acid polypeptide reads, in one-letter code: Keratin-associated protein 3-3 (98 aa).

Ala2 carries the post-translational modification N-acetylalanine. Repeat copies occupy residues 3-7 (CCAPL), 8-12 (CCSAR), and 47-51 (CCDNC). The 3 X 5 AA repeats of C-C-X(3) stretch occupies residues 3–59 (CCAPLCCSARTSPATTICSSDKFCRCGVCLPSTCPHTVWLLEPTCCDNCPPPCHIPQ).

The protein belongs to the KRTAP type 3 family. Interacts with hair keratins.

Functionally, in the hair cortex, hair keratin intermediate filaments are embedded in an interfilamentous matrix, consisting of hair keratin-associated proteins (KRTAP), which are essential for the formation of a rigid and resistant hair shaft through their extensive disulfide bond cross-linking with abundant cysteine residues of hair keratins. The matrix proteins include the high-sulfur and high-glycine-tyrosine keratins. In Bos taurus (Bovine), this protein is Keratin-associated protein 3-3.